The chain runs to 483 residues: Regulatory protein ViaA (483 aa).

This sequence belongs to the ViaA family. Homodimer. Interacts with RavA.

It is found in the cytoplasm. Its function is as follows. Component of the RavA-ViaA chaperone complex, which may act on the membrane to optimize the function of some of the respiratory chains. ViaA stimulates the ATPase activity of RavA. This is Regulatory protein ViaA from Escherichia coli (strain 55989 / EAEC).